We begin with the raw amino-acid sequence, 338 residues long: Fructose-1,6-bisphosphatase class 1 1 (338 aa).

Mg(2+) is bound by residues Glu94, Asp116, Leu118, and Asp119. Residues 119 to 122 (DGSS), Asn210, and Lys276 each bind substrate. Residue Glu282 participates in Mg(2+) binding.

The protein belongs to the FBPase class 1 family. In terms of assembly, homotetramer. Mg(2+) serves as cofactor.

It localises to the cytoplasm. The catalysed reaction is beta-D-fructose 1,6-bisphosphate + H2O = beta-D-fructose 6-phosphate + phosphate. Its pathway is carbohydrate biosynthesis; gluconeogenesis. The polypeptide is Fructose-1,6-bisphosphatase class 1 1 (Paraburkholderia phymatum (strain DSM 17167 / CIP 108236 / LMG 21445 / STM815) (Burkholderia phymatum)).